We begin with the raw amino-acid sequence, 206 residues long: 2,3-bisphosphoglycerate-dependent phosphoglycerate mutase (206 aa).

Residues 9-16 (RHGQSEWN), 22-23 (TG), R61, 88-91 (ERDY), K99, 115-116 (RR), and 159-160 (GN) contribute to the substrate site. The active-site Tele-phosphohistidine intermediate is the H10. Catalysis depends on E88, which acts as the Proton donor/acceptor.

It belongs to the phosphoglycerate mutase family. BPG-dependent PGAM subfamily. As to quaternary structure, homodimer.

It carries out the reaction (2R)-2-phosphoglycerate = (2R)-3-phosphoglycerate. It participates in carbohydrate degradation; glycolysis; pyruvate from D-glyceraldehyde 3-phosphate: step 3/5. In terms of biological role, catalyzes the interconversion of 2-phosphoglycerate and 3-phosphoglycerate. The protein is 2,3-bisphosphoglycerate-dependent phosphoglycerate mutase of Methylocella silvestris (strain DSM 15510 / CIP 108128 / LMG 27833 / NCIMB 13906 / BL2).